Reading from the N-terminus, the 148-residue chain is MILKKCQFSEEREQIVAEAIRPVATELRLIDAADFIALLRFESYASIADLVESAAELYFLPGTVNFGLGGNYNLDWDSRPEVILDLELKPRGVTVYARLVLAGDTAGIEISHINFQQPSGDPDENTAFLAKSLAESKFVKTYPLPLAS.

The protein to A.tumefaciens Atu0565/AGR_C_992.

This is an uncharacterized protein from Rhizobium meliloti (strain 1021) (Ensifer meliloti).